The sequence spans 1050 residues: TSC22 domain family protein 1 (1050 aa).

The required for interaction with TGFBR1 and promotion of TGF-beta signaling stretch occupies residues 1-99 (MHQPPESTAA…SQAQLQGQPL (99 aa)). Disordered regions lie at residues 22 to 111 (MAHP…KKSG), 126 to 285 (ISSN…VSSA), 445 to 479 (QTPTEASSSERESTSGSSVSSSVSTLSHYTESVGS), 511 to 531 (DFSSPGPQSISQSQMSQVQLQ), 581 to 609 (LAQPQLPYPQPAPPVQTPLPGAPPQQLQY), 720 to 740 (VQPPSTQVTPSVVQQGAPPSS), 795 to 847 (QLPT…GSLV), and 879 to 919 (SLAQ…VSDG). Residues 38–55 (ASALSAAGTGVSGAAPSS) show a composition bias toward low complexity. A compositionally biased stretch (pro residues) spans 58 to 71 (FPPPSSLLQPPPPA). Residues 85-97 (SLNLLSQAQLQGQ) are compositionally biased toward low complexity. Residues 134 to 143 (EDTESYDDLD) show a composition bias toward acidic residues. A compositionally biased stretch (basic residues) spans 217 to 241 (HPHHLHHHHHIHHGHHLHHGHHHSS). Serine 265 carries the phosphoserine modification. Over residues 458–476 (TSGSSVSSSVSTLSHYTES) the composition is skewed to low complexity. The span at 586 to 603 (LPYPQPAPPVQTPLPGAP) shows a compositional bias: pro residues. A compositionally biased stretch (low complexity) spans 906–919 (LSGDSGGVSAVSDG). The leucine-zipper stretch occupies residues 983–1004 (LKEQIKELIEKNSQLEQENNLL). Residues 1015 to 1050 (QFQAQLQTGSPPATTQPQGTTQPPAQPASQGSGSTA) are disordered. Low complexity predominate over residues 1021–1050 (QTGSPPATTQPQGTTQPPAQPASQGSGSTA).

This sequence belongs to the TSC-22/Dip/Bun family. Forms homodimers. Forms heterodimers. Component of a complex composed of TSC22D1 (via N-terminus), TGFBR1 and TGFBR2; the interaction between TSC22D1 and TGFBR1 is inhibited by SMAD7 and promoted by TGFB1. Interacts with SMAD7; the interaction requires TGF-beta and the interaction is inhibited by TGFBR1. Interacts with TPT1/fortilin; interaction results in the destabilization of TSC22D1 protein and prevents TSC22D1-mediated apoptosis. Interacts with SMAD4 (via N-terminus). Interacts with ACVRL1/ALK1, ACVR1/ALK2, BMPR1A/ALK3, ACVR1B/ALK4, BMPR1B/ALK6, ACVR2A/ACTRII, and BMPR2. Interacts with SMAD6. Interacts with TFE3; the interaction is enhanced in the presence of TGF-beta. In terms of assembly, forms a heterodimer with TSC22D4/THG1. As to quaternary structure, forms a heterodimer with TSC22D4/THG1. Interacts with histone H1-2. Interacts with GNL3. Ubiquitously expressed, abundantly expressed in testis, ovary, uterus, and lung. Expressed in cardiomyocytes.

Its subcellular location is the cytoplasm. The protein resides in the nucleus. It localises to the cell membrane. It is found in the mitochondrion. Its function is as follows. Transcriptional repressor. Acts on the C-type natriuretic peptide (CNP) promoter. Acts to promote CASP3-mediated apoptosis. Positively regulates TGF-beta signaling by interacting with SMAD7 which inhibits binding of SMAD7 to TGFBR1, preventing recruitment of SMURF ubiquitin ligases to TGFBR1 and inhibiting SMURF-mediated ubiquitination and degradation of TGFBR1. Contributes to enhancement of TGF-beta signaling by binding to and modulating the transcription activator activity of SMAD4. Promotes TGF-beta-induced transcription of COL1A2; via its interaction with TFE3 at E-boxes in the gene proximal promoter. Plays a role in the repression of hematopoietic precursor cell growth. Promotes IL2 deprivation-induced apoptosis in T-lymphocytes, via repression of TSC22D3/GILZ transcription and activation of the caspase cascade. Functionally, may act to negatively regulate TGFB3 signaling and thereby inhibit cell death in mammary gland cells. Positively regulates cell death in response to TGFB3 during mammary gland involution. This is TSC22 domain family protein 1 from Rattus norvegicus (Rat).